A 139-amino-acid polypeptide reads, in one-letter code: Putative pre-16S rRNA nuclease (139 aa).

This sequence belongs to the YqgF nuclease family.

The protein resides in the cytoplasm. Its function is as follows. Could be a nuclease involved in processing of the 5'-end of pre-16S rRNA. The sequence is that of Putative pre-16S rRNA nuclease from Dictyoglomus thermophilum (strain ATCC 35947 / DSM 3960 / H-6-12).